We begin with the raw amino-acid sequence, 104 residues long: L-rhamnose mutarotase (104 aa).

Position 18 (tyrosine 18) interacts with substrate. The active-site Proton donor is histidine 22. Residues tyrosine 41 and 76–77 (WW) contribute to the substrate site.

This sequence belongs to the rhamnose mutarotase family. Homodimer.

It localises to the cytoplasm. It carries out the reaction alpha-L-rhamnose = beta-L-rhamnose. Its pathway is carbohydrate metabolism; L-rhamnose metabolism. In terms of biological role, involved in the anomeric conversion of L-rhamnose. The polypeptide is L-rhamnose mutarotase (Acidiphilium cryptum (strain JF-5)).